A 304-amino-acid polypeptide reads, in one-letter code: Oxygen-dependent coproporphyrinogen-III oxidase (304 aa).

Ser93 serves as a coordination point for substrate. His97 and His107 together coordinate a divalent metal cation. Catalysis depends on His107, which acts as the Proton donor. 109 to 111 (NVR) serves as a coordination point for substrate. The a divalent metal cation site is built by His146 and His176. The interval 241–276 (YVEFNLVYDRGTLFGLQSGGRTESILMSLPPQVRWG) is important for dimerization. 259–261 (GGR) contributes to the substrate binding site.

It belongs to the aerobic coproporphyrinogen-III oxidase family. In terms of assembly, homodimer. A divalent metal cation is required as a cofactor.

The protein resides in the cytoplasm. It catalyses the reaction coproporphyrinogen III + O2 + 2 H(+) = protoporphyrinogen IX + 2 CO2 + 2 H2O. Its pathway is porphyrin-containing compound metabolism; protoporphyrin-IX biosynthesis; protoporphyrinogen-IX from coproporphyrinogen-III (O2 route): step 1/1. Its function is as follows. Involved in the heme biosynthesis. Catalyzes the aerobic oxidative decarboxylation of propionate groups of rings A and B of coproporphyrinogen-III to yield the vinyl groups in protoporphyrinogen-IX. The polypeptide is Oxygen-dependent coproporphyrinogen-III oxidase (Pseudomonas savastanoi pv. phaseolicola (strain 1448A / Race 6) (Pseudomonas syringae pv. phaseolicola (strain 1448A / Race 6))).